Consider the following 625-residue polypeptide: MRILLIHSDYLEYEVKDKALKKPEEISENQKKGRLDEVLAVFMSVEKVDEQNPEEIVKKAVKEIEEVVSQVKTNNIFVYPFAHLSSELGSPDVALRILKEIENELKNKGYNVRRAPFGYYKAFKLSCKGHPLAELSRTIVPGEAKKEEEVPEALKKEEELVSYWYILTPEGELVEVDKFDFSGYENLKKFANYEINKSRLVTEEPPHVKIMLEQELVDYEEGSDPGNLRYYPKGRLIKSLLENYVTDKVIEYGAMEVETPIMYDFEHPALEKYLNRFPARQYVVKSGDKRFFLRFAACFGQFLIKKDATISYRHLPLRMYELTRYSFRREKRGELSGLRRLRAFTMPDMHTVAKNLQQAMEEFKKQYKLSMEVLKGVGLTPEDYEVAIRFTEDFWNENKDFIVDLAGIIGKPVLIEMWKQRFFYFILKFEFNFVDNLDKAAALSTVQIDVENSQRFGITYYDEEGQEKYPLLLHCSPSGAIERVMYAILEKQAKIMKKGKKPMYPLWLSPIQVRIIPVSEKYLDYALYIAGKLEGAKIRADVDDRNERLNKKIREAEKEWIPYIIVVGENEKRMGVITVRKREDNKQYEIQVEDLIKEIRQKTEGFPYKPRPLPPLVSMRPKFRG.

The segment at 1-147 (MRILLIHSDY…TIVPGEAKKE (147 aa)) is editing domain. The tract at residues 206–505 (PHVKIMLEQE…MKKGKKPMYP (300 aa)) is catalytic. Residues Cys298, His350, and His474 each coordinate Zn(2+).

Belongs to the class-II aminoacyl-tRNA synthetase family. In terms of assembly, homodimer. It depends on Zn(2+) as a cofactor.

The protein localises to the cytoplasm. The catalysed reaction is tRNA(Thr) + L-threonine + ATP = L-threonyl-tRNA(Thr) + AMP + diphosphate + H(+). Functionally, catalyzes the attachment of threonine to tRNA(Thr) in a two-step reaction: L-threonine is first activated by ATP to form Thr-AMP and then transferred to the acceptor end of tRNA(Thr). Also edits incorrectly charged L-seryl-tRNA(Thr). This chain is Threonine--tRNA ligase, found in Thermococcus sibiricus (strain DSM 12597 / MM 739).